The chain runs to 114 residues: Probable 4-amino-4-deoxy-L-arabinose-phosphoundecaprenol flippase subunit ArnE (114 aa).

The next 3 helical transmembrane spans lie at 38–58, 64–84, and 94–114; these read LTLRWLAIAVVSLGLGMLLWL, LPLSVAYPMLSFNFVLVTLAA, and LRHWLGVAAIMFGILLMSWHL. The 70-residue stretch at 43–112 folds into the EamA domain; it reads LAIAVVSLGL…IMFGILLMSW (70 aa).

Belongs to the ArnE family. In terms of assembly, heterodimer of ArnE and ArnF.

The protein resides in the cell inner membrane. The protein operates within bacterial outer membrane biogenesis; lipopolysaccharide biosynthesis. Its function is as follows. Translocates 4-amino-4-deoxy-L-arabinose-phosphoundecaprenol (alpha-L-Ara4N-phosphoundecaprenol) from the cytoplasmic to the periplasmic side of the inner membrane. The protein is Probable 4-amino-4-deoxy-L-arabinose-phosphoundecaprenol flippase subunit ArnE of Yersinia pseudotuberculosis serotype O:3 (strain YPIII).